Here is a 579-residue protein sequence, read N- to C-terminus: Glypican-3 (579 aa).

An N-terminal signal peptide occupies residues 1-24 (MAGTVRTACLLVAMLLGLGCLGQA). Gln-25 carries the post-translational modification Pyrrolidone carboxylic acid. Disulfide bonds link Cys-34-Cys-71, Cys-64-Cys-261, Cys-72-Cys-264, Cys-196-Cys-348, Cys-251-Cys-284, Cys-273-Cys-421, and Cys-277-Cys-409. N-linked (GlcNAc...) asparagine glycans are attached at residues Asn-123 and Asn-240. A Phosphoserine modification is found at Ser-351. An N-linked (GlcNAc...) asparagine glycan is attached at Asn-417. O-linked (Xyl...) (glycosaminoglycan) serine glycans are attached at residues Ser-494 and Ser-508. The tract at residues 533 to 552 (DAPGNKQHGNQKDNEITTSH) is disordered. Ser-553 carries the GPI-anchor amidated serine lipid modification. Residues 554 to 579 (VGNMPSPLKILISVAIYVACFFFLVH) constitute a propeptide, removed in mature form.

This sequence belongs to the glypican family. Heterodimer; disulfide-linked. Cleavage by a furin-like convertase results in production of alpha and beta chains which form a disulfide-linked heterodimer. Interacts with DPP4. Interacts with FGF2. Interacts with WNT5A. Also interacts with WNT3A and WNT7B. Interacts with hedgehog protein SHH; the heparan sulfate chains are not required for the interaction. Also interacts with hedgehog protein IHH. Interacts with CD81. Interacts with Wnt receptors FZD4, FZD7 and FZD8; the heparan sulfate chains are required for the interaction. O-glycosylated; contains heparan sulfate and/or chondroitin sulfate. In terms of processing, cleaved intracellularly by a furin-like convertase to generate 2 subunits, alpha and beta, which remain associated through disulfide bonds and are associated with the cell surface via the GPI-anchor. This processing is essential for its role in inhibition of hedgehog signaling. A second proteolytic event may result in cleavage of the protein on the cell surface, separating it from the GPI-anchor and leading to its shedding from the cell surface. In terms of tissue distribution, in the developing limb, absent from the apical epidermal ridge at 11 dpc but highly expressed in the underlying mesenchyme. Expression in the mesenchyme at this stage is asymmetric with highest levels in the regions of the distal mesenchyme within the progress zone and within the proximal anterior and posterior limb bud. At later developmental stages including 12.5 and 13.5 dpc, expression is restricted to the interdigital webs and the regions of chondrocytic differentiation of the developing bones. In the embryonic kidney, expressed in both the ureteric bud and mesenchymal cells as early as 13.5 dpc. Expression at 16.5 dpc is similar to that at 13.5 dpc but decreases by 18.5 dpc.

Its subcellular location is the cell membrane. Its function is as follows. Cell surface proteoglycan. Negatively regulates the hedgehog signaling pathway when attached via the GPI-anchor to the cell surface by competing with the hedgehog receptor PTC1 for binding to hedgehog proteins. Binding to the hedgehog protein SHH triggers internalization of the complex by endocytosis and its subsequent lysosomal degradation. Positively regulates the canonical Wnt signaling pathway by binding to the Wnt receptor Frizzled and stimulating the binding of the Frizzled receptor to Wnt ligands. Positively regulates the non-canonical Wnt signaling pathway. Binds to CD81 which decreases the availability of free CD81 for binding to the transcriptional repressor HHEX, resulting in nuclear translocation of HHEX and transcriptional repression. Inhibits the dipeptidyl peptidase activity of DPP4. Plays a role in limb patterning and skeletal development by controlling the cellular response to BMP4. Modulates the effects of growth factors BMP2, BMP7 and FGF7 on renal branching morphogenesis. Required for coronary vascular development. Plays a role in regulating cell movements during gastrulation. The protein is Glypican-3 (Gpc3) of Mus musculus (Mouse).